A 546-amino-acid chain; its full sequence is MSLQENVIRPTANFPPSVWGDQFLTYDEREDQAGLEKVVEDLKDKVRQEILGTLDVPSQHTDLLRLIDSIQRLGIAYHFEEEIDRTLHHFYDAYGDNWTGGATSVWFRIMRQHGFFVSSDVFKSYKDKNGAFKEPLENDIVGFLELYEATYLRVPGEVILDDALVFTKGRLGEISNDPLWRNSIVSTQIIEALEQPVQKRLHRHEALRYITFYQQQASCNESLLKLAKLGFNLLQSLHKKELSQVYKWWKGFDVPTNLPYARNRMVECYFWSLSVFFEPKYSESRMFLAKVFAVETILDDTYDAFGTYEELEIFTAAVHRSSVTCLDALPKNYKLIYRIILSLYEDMEKILTKMGKAHHLNYIRNAMMEYIGCYLKEAKWANDEYTPTMEEHKEVTTVSSGYKFSLIASFAAMGDAITDETFKWALTMPPLAKACCVLCRVMDDIVTHKEEQERKHVASGIQCYMKEFDVTEQHVYDVFNAKVEDAWVEMNEESLKCKDVKRPVIMRVINLARAMDVLYKNKDHYTHVGPELINHIKSLVVDPIMA.

Asp299, Asp303, Asp443, and Glu451 together coordinate Mg(2+). Positions 299–303 (DDTYD) match the DDXXD motif motif.

Belongs to the terpene synthase family. Tpsa subfamily. It depends on Mg(2+) as a cofactor. Requires Mn(2+) as cofactor. In terms of tissue distribution, highly expressed in roots, lower levels in stems and leaves and detected in disk florets, but not in ray florets.

It carries out the reaction (2E,6E)-farnesyl diphosphate = (-)-alpha-isocomene + diphosphate. It functions in the pathway secondary metabolite biosynthesis; terpenoid biosynthesis. Functionally, sesquiterpene synthase involved in the biosynthesis of alpha-isocomene as the major product and detectable amounts of beta-caryophyllene, beta-isocomene, silphinene and modeph-2-ene. Produces exclusively the (-)-(E)-beta caryophyllene enantiomer. This Matricaria chamomilla var. recutita (German chamomile) protein is Alpha-isocomene synthase.